We begin with the raw amino-acid sequence, 313 residues long: Ribose-phosphate pyrophosphokinase (313 aa).

Residues 37–39 (DGE) and 96–97 (RQ) contribute to the ATP site. Histidine 131 and aspartate 170 together coordinate Mg(2+). The active site involves lysine 193. D-ribose 5-phosphate contacts are provided by residues arginine 195, aspartate 219, and 223–227 (DTAGT).

Belongs to the ribose-phosphate pyrophosphokinase family. Class I subfamily. As to quaternary structure, homohexamer. Mg(2+) serves as cofactor.

The protein localises to the cytoplasm. The enzyme catalyses D-ribose 5-phosphate + ATP = 5-phospho-alpha-D-ribose 1-diphosphate + AMP + H(+). The protein operates within metabolic intermediate biosynthesis; 5-phospho-alpha-D-ribose 1-diphosphate biosynthesis; 5-phospho-alpha-D-ribose 1-diphosphate from D-ribose 5-phosphate (route I): step 1/1. Functionally, involved in the biosynthesis of the central metabolite phospho-alpha-D-ribosyl-1-pyrophosphate (PRPP) via the transfer of pyrophosphoryl group from ATP to 1-hydroxyl of ribose-5-phosphate (Rib-5-P). This is Ribose-phosphate pyrophosphokinase from Pseudomonas putida (strain ATCC 47054 / DSM 6125 / CFBP 8728 / NCIMB 11950 / KT2440).